The primary structure comprises 1260 residues: uncharacterized protein (1260 aa).

This sequence belongs to the oxoprolinase family.

This is an uncharacterized protein from Schizosaccharomyces pombe (strain 972 / ATCC 24843) (Fission yeast).